Reading from the N-terminus, the 239-residue chain is Ribonuclease P protein component 3 (239 aa).

It belongs to the eukaryotic/archaeal RNase P protein component 3 family. In terms of assembly, consists of a catalytic RNA component and at least 4-5 protein subunits.

It localises to the cytoplasm. It catalyses the reaction Endonucleolytic cleavage of RNA, removing 5'-extranucleotides from tRNA precursor.. Its function is as follows. Part of ribonuclease P, a protein complex that generates mature tRNA molecules by cleaving their 5'-ends. This Methanosarcina acetivorans (strain ATCC 35395 / DSM 2834 / JCM 12185 / C2A) protein is Ribonuclease P protein component 3.